A 239-amino-acid polypeptide reads, in one-letter code: Ribosomal RNA small subunit methyltransferase G (239 aa).

Residues G77, F82, 128 to 129, and R147 contribute to the S-adenosyl-L-methionine site; that span reads AE. The interval 216-239 is disordered; it reads KKQSQTPKKFPRKPGTPNKSPIEG.

It belongs to the methyltransferase superfamily. RNA methyltransferase RsmG family.

The protein resides in the cytoplasm. Functionally, specifically methylates the N7 position of guanine in position 535 of 16S rRNA. The chain is Ribosomal RNA small subunit methyltransferase G from Bacillus licheniformis (strain ATCC 14580 / DSM 13 / JCM 2505 / CCUG 7422 / NBRC 12200 / NCIMB 9375 / NCTC 10341 / NRRL NRS-1264 / Gibson 46).